Consider the following 218-residue polypeptide: Cytochrome b6 (218 aa).

The chain crosses the membrane as a helical span at residues 35–55; the sequence is IFYCLGGITLVCFLIQFATGF. Cys38 provides a ligand contact to heme c. Residues His89 and His103 each contribute to the heme b site. Transmembrane regions (helical) follow at residues 93–113, 119–139, and 189–209; these read ASMM…TGGF, LTWV…VTGY, and LHTF…FLMI. Positions 190 and 205 each coordinate heme b.

Belongs to the cytochrome b family. PetB subfamily. The 4 large subunits of the cytochrome b6-f complex are cytochrome b6, subunit IV (17 kDa polypeptide, PetD), cytochrome f and the Rieske protein, while the 4 small subunits are PetG, PetL, PetM and PetN. The complex functions as a dimer. Requires heme b as cofactor. Heme c serves as cofactor.

Its subcellular location is the cellular thylakoid membrane. Functionally, component of the cytochrome b6-f complex, which mediates electron transfer between photosystem II (PSII) and photosystem I (PSI), cyclic electron flow around PSI, and state transitions. In Synechococcus sp. (strain WH7803), this protein is Cytochrome b6.